Here is a 146-residue protein sequence, read N- to C-terminus: uncharacterized protein (146 aa).

Positions 67–93 are disordered; it reads DDNGMESGFCSGATSTGQSASTSPAPV. The segment covering 77 to 92 has biased composition (low complexity); the sequence is SGATSTGQSASTSPAP.

This is an uncharacterized protein from Caenorhabditis elegans.